We begin with the raw amino-acid sequence, 355 residues long: UDP-N-acetylglucosamine--N-acetylmuramyl-(pentapeptide) pyrophosphoryl-undecaprenol N-acetylglucosamine transferase (355 aa).

UDP-N-acetyl-alpha-D-glucosamine is bound by residues 14–16 (TGG), Asn126, Arg162, Ser190, Ile244, and Gln289.

It belongs to the glycosyltransferase 28 family. MurG subfamily.

Its subcellular location is the cell inner membrane. The catalysed reaction is di-trans,octa-cis-undecaprenyl diphospho-N-acetyl-alpha-D-muramoyl-L-alanyl-D-glutamyl-meso-2,6-diaminopimeloyl-D-alanyl-D-alanine + UDP-N-acetyl-alpha-D-glucosamine = di-trans,octa-cis-undecaprenyl diphospho-[N-acetyl-alpha-D-glucosaminyl-(1-&gt;4)]-N-acetyl-alpha-D-muramoyl-L-alanyl-D-glutamyl-meso-2,6-diaminopimeloyl-D-alanyl-D-alanine + UDP + H(+). The protein operates within cell wall biogenesis; peptidoglycan biosynthesis. Its function is as follows. Cell wall formation. Catalyzes the transfer of a GlcNAc subunit on undecaprenyl-pyrophosphoryl-MurNAc-pentapeptide (lipid intermediate I) to form undecaprenyl-pyrophosphoryl-MurNAc-(pentapeptide)GlcNAc (lipid intermediate II). This Paracidovorax citrulli (strain AAC00-1) (Acidovorax citrulli) protein is UDP-N-acetylglucosamine--N-acetylmuramyl-(pentapeptide) pyrophosphoryl-undecaprenol N-acetylglucosamine transferase.